Consider the following 92-residue polypeptide: Antifungal protein B (92 aa).

The N-terminal stretch at Met1–Ala18 is a signal peptide. Positions Ser19 to Gln34 are excised as a propeptide. Cystine bridges form between Cys42–Cys70, Cys49–Cys77, and Cys62–Cys88.

This sequence belongs to the antifungal protein pafB family.

It is found in the secreted. It localises to the host cytoplasm. In terms of biological role, antifungal protein that acts as an inhibitor of growth of human pathogenic molds and yeasts. This is Antifungal protein B from Penicillium rubens (strain ATCC 28089 / DSM 1075 / NRRL 1951 / Wisconsin 54-1255) (Penicillium chrysogenum).